A 739-amino-acid polypeptide reads, in one-letter code: Thiamine biosynthesis multifunctional protein ThiED (739 aa).

Residues 1–210 (MTDFSLYLVT…PSPAEAAREL (210 aa)) form a thiamine-phosphate synthase region. Residues 37–41 (QLRDK) and asparagine 69 contribute to the 4-amino-2-methyl-5-(diphosphooxymethyl)pyrimidine site. Residues aspartate 70 and aspartate 88 each coordinate Mg(2+). 4-amino-2-methyl-5-(diphosphooxymethyl)pyrimidine is bound at residue threonine 107. 140–142 (TDT) is a binding site for 2-[(2R,5Z)-2-carboxy-4-methylthiazol-5(2H)-ylidene]ethyl phosphate. Residue lysine 143 coordinates 4-amino-2-methyl-5-(diphosphooxymethyl)pyrimidine. 2-[(2R,5Z)-2-carboxy-4-methylthiazol-5(2H)-ylidene]ethyl phosphate is bound by residues glycine 174 and 194-195 (VS). The interval 226-481 (LTIAGTDPTG…GSGSGPVDHF (256 aa)) is hydroxymethylpyrimidine/phosphomethylpyrimidine kinase. Glutamine 263 contributes to the 4-amino-5-hydroxymethyl-2-methylpyrimidine binding site. The thiaminase-2 stretch occupies residues 527 to 739 (YTRALWEATG…FDQATRQGWN (213 aa)).

It in the N-terminal section; belongs to the thiamine-phosphate synthase family. This sequence in the central section; belongs to the ThiD family. The protein in the C-terminal section; belongs to the thiaminase-2 family. It depends on Mg(2+) as a cofactor.

It carries out the reaction 2-[(2R,5Z)-2-carboxy-4-methylthiazol-5(2H)-ylidene]ethyl phosphate + 4-amino-2-methyl-5-(diphosphooxymethyl)pyrimidine + 2 H(+) = thiamine phosphate + CO2 + diphosphate. The enzyme catalyses 2-(2-carboxy-4-methylthiazol-5-yl)ethyl phosphate + 4-amino-2-methyl-5-(diphosphooxymethyl)pyrimidine + 2 H(+) = thiamine phosphate + CO2 + diphosphate. It catalyses the reaction 4-methyl-5-(2-phosphooxyethyl)-thiazole + 4-amino-2-methyl-5-(diphosphooxymethyl)pyrimidine + H(+) = thiamine phosphate + diphosphate. The catalysed reaction is 4-amino-5-hydroxymethyl-2-methylpyrimidine + ATP = 4-amino-2-methyl-5-(phosphooxymethyl)pyrimidine + ADP + H(+). It carries out the reaction 4-amino-2-methyl-5-(phosphooxymethyl)pyrimidine + ATP = 4-amino-2-methyl-5-(diphosphooxymethyl)pyrimidine + ADP. Its pathway is cofactor biosynthesis; thiamine diphosphate biosynthesis; 4-amino-2-methyl-5-diphosphomethylpyrimidine from 5-amino-1-(5-phospho-D-ribosyl)imidazole: step 3/3. It functions in the pathway cofactor biosynthesis; thiamine diphosphate biosynthesis; thiamine phosphate from 4-amino-2-methyl-5-diphosphomethylpyrimidine and 4-methyl-5-(2-phosphoethyl)-thiazole: step 1/1. Functionally, condenses 4-methyl-5-(beta-hydroxyethyl)thiazole monophosphate (THZ-P) and 2-methyl-4-amino-5-hydroxymethyl pyrimidine pyrophosphate (HMP-PP) to form thiamine monophosphate (TMP). Its function is as follows. Catalyzes the phosphorylation of hydroxymethylpyrimidine phosphate (HMP-P) to HMP-PP, and of HMP to HMP-P. The sequence is that of Thiamine biosynthesis multifunctional protein ThiED (thiED) from Corynebacterium efficiens (strain DSM 44549 / YS-314 / AJ 12310 / JCM 11189 / NBRC 100395).